Reading from the N-terminus, the 97-residue chain is Co-chaperonin GroES (97 aa).

The protein belongs to the GroES chaperonin family. Heptamer of 7 subunits arranged in a ring. Interacts with the chaperonin GroEL.

Its subcellular location is the cytoplasm. Functionally, together with the chaperonin GroEL, plays an essential role in assisting protein folding. The GroEL-GroES system forms a nano-cage that allows encapsulation of the non-native substrate proteins and provides a physical environment optimized to promote and accelerate protein folding. GroES binds to the apical surface of the GroEL ring, thereby capping the opening of the GroEL channel. This Enterobacter sp. (strain 638) protein is Co-chaperonin GroES.